The chain runs to 289 residues: MLRDLFVKKKKYAAIPSEQVRKDVPDGVMTKCPKCKKIMYTKELLKNLKVCVNCGYHHPMNAWERLDSILDEGSFREYDKEMVSVNPLQFPNYEEKLENDRKKTELNEAVVTGEGTIDEMLVVVAVMDSRFRMGSMGSVVGEKIARAVEKAYELQVPFIIFTASGGARMQEGILSLMQMAKTSVALKKYSNAGGLFISVMTHPTTGGVSASFASLGDYNLAEPGALIGFAGRRVIEQTVREKLPEDFQTAEFLLEHGQLDAVVHRNEMRESLRKILEVHQGEGMAVWQN.

The region spanning 28 to 289 is the CoA carboxyltransferase N-terminal domain; sequence VMTKCPKCKK…QGEGMAVWQN (262 aa). 4 residues coordinate Zn(2+): Cys-32, Cys-35, Cys-51, and Cys-54. A C4-type zinc finger spans residues 32 to 54; the sequence is CPKCKKIMYTKELLKNLKVCVNC.

Belongs to the AccD/PCCB family. As to quaternary structure, acetyl-CoA carboxylase is a heterohexamer composed of biotin carboxyl carrier protein (AccB), biotin carboxylase (AccC) and two subunits each of ACCase subunit alpha (AccA) and ACCase subunit beta (AccD). Zn(2+) serves as cofactor.

It localises to the cytoplasm. It carries out the reaction N(6)-carboxybiotinyl-L-lysyl-[protein] + acetyl-CoA = N(6)-biotinyl-L-lysyl-[protein] + malonyl-CoA. The protein operates within lipid metabolism; malonyl-CoA biosynthesis; malonyl-CoA from acetyl-CoA: step 1/1. Functionally, component of the acetyl coenzyme A carboxylase (ACC) complex. Biotin carboxylase (BC) catalyzes the carboxylation of biotin on its carrier protein (BCCP) and then the CO(2) group is transferred by the transcarboxylase to acetyl-CoA to form malonyl-CoA. This chain is Acetyl-coenzyme A carboxylase carboxyl transferase subunit beta, found in Bacillus cytotoxicus (strain DSM 22905 / CIP 110041 / 391-98 / NVH 391-98).